Reading from the N-terminus, the 295-residue chain is Bifunctional protein FolD (295 aa).

NADP(+) is bound by residues 166–168 (GRS), S195, and I236.

Belongs to the tetrahydrofolate dehydrogenase/cyclohydrolase family. In terms of assembly, homodimer.

It catalyses the reaction (6R)-5,10-methylene-5,6,7,8-tetrahydrofolate + NADP(+) = (6R)-5,10-methenyltetrahydrofolate + NADPH. The enzyme catalyses (6R)-5,10-methenyltetrahydrofolate + H2O = (6R)-10-formyltetrahydrofolate + H(+). It participates in one-carbon metabolism; tetrahydrofolate interconversion. Catalyzes the oxidation of 5,10-methylenetetrahydrofolate to 5,10-methenyltetrahydrofolate and then the hydrolysis of 5,10-methenyltetrahydrofolate to 10-formyltetrahydrofolate. In Chlorobium chlorochromatii (strain CaD3), this protein is Bifunctional protein FolD.